We begin with the raw amino-acid sequence, 147 residues long: CLAVATA3/ESR (CLE)-related protein 4C (147 aa).

The first 21 residues, 1-21 (MATNTMLCLFVISVVLALAFA), serve as a signal peptide directing secretion. Residues 21 to 83 (ATNKKGDEEP…SNQLPNNNWM (63 aa)) form a required for secretion from the host cytoplasm to the host apoplasm region. N-linked (GlcNAc...) asparagine glycosylation occurs at Asn-32. Disordered regions lie at residues 57-86 (GADA…MAPP) and 116-147 (RKTG…PIHH). The span at 125-137 (HHEETTLEQEKRV) shows a compositional bias: basic and acidic residues. Residues 136–147 (RVAGAGPDPIHH) carry the CLE motif.

This sequence belongs to the CLV3/ESR signal peptide family. In terms of tissue distribution, highly expressed exclusively within the dorsal esophageal gland cell during syncytium formation in host plants.

The protein localises to the secreted. Its subcellular location is the host cytoplasm. It is found in the host extracellular space. The protein resides in the extracellular space. It localises to the apoplast. Mimics host plant CLE extracellular signal peptides that regulate cell fate. May play a role in the differentiation or division of feeding cells (syncytia) induced in plant roots during infection. The sequence is that of CLAVATA3/ESR (CLE)-related protein 4C (CLE-4C) from Globodera rostochiensis (Golden nematode worm).